We begin with the raw amino-acid sequence, 230 residues long: MNMKEPISIILLESALELVPKELWKHPAVVKNARRRGKKPGETLLDVSLHYHAMKKLKDKEKRGRPDIVHISLLNALESPLNKEGYLRIYIHTYPGHIIFVKPETRIPRNYNRFVGLMEQLLIHGKVPPDSDDPLLYVKTMTISDLLEKINKNGIILLREHGEKEKPENIVKYAVENNYAIGIGGFPHGDYSQEIISISKAEFSIYNKPLTTWITISRVIVGAEHLYNII.

Residues Gly-184, Gly-189, and 205-210 (IYNKPL) each bind S-adenosyl-L-methionine.

It belongs to the class IV-like SAM-binding methyltransferase superfamily. RNA methyltransferase NEP1 family. Homodimer.

The catalysed reaction is a pseudouridine in rRNA + S-adenosyl-L-methionine = an N(1)-methylpseudouridine in rRNA + S-adenosyl-L-homocysteine + H(+). Functionally, methyltransferase involved in ribosomal biogenesis. Specifically catalyzes the N1-methylation of the pseudouridine corresponding to position 914 in M.jannaschii 16S rRNA. This is Ribosomal RNA small subunit methyltransferase Nep1 from Staphylothermus marinus (strain ATCC 43588 / DSM 3639 / JCM 9404 / F1).